A 398-amino-acid polypeptide reads, in one-letter code: Ubiquitin carboxyl-terminal hydrolase 17-like protein 6 (398 aa).

The 296-residue stretch at 80–375 (AGLQNMGNTC…QAYVLFYIQK (296 aa)) folds into the USP domain. The active-site Nucleophile is the Cys-89. Catalysis depends on His-334, which acts as the Proton acceptor.

Belongs to the peptidase C19 family. USP17 subfamily.

The protein localises to the nucleus. Its subcellular location is the cytoplasm. The enzyme catalyses Thiol-dependent hydrolysis of ester, thioester, amide, peptide and isopeptide bonds formed by the C-terminal Gly of ubiquitin (a 76-residue protein attached to proteins as an intracellular targeting signal).. Functionally, deubiquitinating enzyme that removes conjugated ubiquitin from specific proteins to regulate different cellular processes that may include cell proliferation, progression through the cell cycle, cell migration, and the cellular response to viral infection. Seems to be non-functional in the regulation of apoptosis. This is Ubiquitin carboxyl-terminal hydrolase 17-like protein 6 (USP17L6P) from Homo sapiens (Human).